We begin with the raw amino-acid sequence, 568 residues long: U6 small nuclear RNA (adenine-(43)-N(6))-methyltransferase (568 aa).

The tract at residues 1–20 is disordered; it reads MSEIDTNDIKKEMDNKNYRD. Positions 7–20 are enriched in basic and acidic residues; sequence NDIKKEMDNKNYRD. Arg117, Gly151, Asp175, and Asn250 together coordinate S-adenosyl-L-methionine. 3 disordered regions span residues 363–383, 403–431, and 503–538; these read KENN…INNN, NLDS…NNNN, and DPKI…NKNN. 3 stretches are compositionally biased toward low complexity: residues 365–383, 409–431, and 507–538; these read NNNI…INNN, NNNN…NNNN, and NNNN…NKNN.

Belongs to the methyltransferase superfamily. METTL16/RlmF family.

The enzyme catalyses adenosine in U6 snRNA + S-adenosyl-L-methionine = N(6)-methyladenosine in U6 snRNA + S-adenosyl-L-homocysteine + H(+). RNA N6-methyltransferase that mediates N6-methylation of adenine of U6 small nuclear RNA (U6 snRNA). The polypeptide is U6 small nuclear RNA (adenine-(43)-N(6))-methyltransferase (Dictyostelium discoideum (Social amoeba)).